The sequence spans 618 residues: Probable Xaa-Pro aminopeptidase P (618 aa).

Mn(2+) is bound by residues Asp414, Asp425, Glu523, and Glu537.

It belongs to the peptidase M24B family. It depends on Mn(2+) as a cofactor.

It catalyses the reaction Release of any N-terminal amino acid, including proline, that is linked to proline, even from a dipeptide or tripeptide.. In terms of biological role, catalyzes the removal of a penultimate prolyl residue from the N-termini of peptides. This is Probable Xaa-Pro aminopeptidase P (AMPP) from Metarhizium acridum (strain CQMa 102).